A 307-amino-acid chain; its full sequence is Coproporphyrin III ferrochelatase (307 aa).

Residues Tyr12, Arg29, 45 to 46 (RY), Ser53, and Tyr124 contribute to the Fe-coproporphyrin III site. Residues His181 and Glu263 each contribute to the Fe(2+) site.

This sequence belongs to the ferrochelatase family.

It is found in the cytoplasm. It carries out the reaction Fe-coproporphyrin III + 2 H(+) = coproporphyrin III + Fe(2+). Its pathway is porphyrin-containing compound metabolism; protoheme biosynthesis. Involved in coproporphyrin-dependent heme b biosynthesis. Catalyzes the insertion of ferrous iron into coproporphyrin III to form Fe-coproporphyrin III. This Staphylococcus saprophyticus subsp. saprophyticus (strain ATCC 15305 / DSM 20229 / NCIMB 8711 / NCTC 7292 / S-41) protein is Coproporphyrin III ferrochelatase.